We begin with the raw amino-acid sequence, 441 residues long: Protein C-ets-1 (441 aa).

N6-acetyllysine; alternate occurs at positions 8 and 15. Glycyl lysine isopeptide (Lys-Gly) (interchain with G-Cter in SUMO2); alternate cross-links involve residues Lys8 and Lys15. A Phosphothreonine; by MAPK modification is found at Thr38. A PNT domain is found at 51 to 136 (ATFSGFTKEQ…EHLEILQKED (86 aa)). The interval 130 to 243 (EILQKEDVKP…DNMCMGRTSR (114 aa)) is activation domain; required for transcription activation. A Glycyl lysine isopeptide (Lys-Gly) (interchain with G-Cter in SUMO2) cross-link involves residue Lys138. Tyr223 is subject to Phosphotyrosine. A Glycyl lysine isopeptide (Lys-Gly) (interchain with G-Cter in SUMO) cross-link involves residue Lys227. A phosphoserine mark is found at Ser251 and Ser254. Thr265 is modified (phosphothreonine). Residues Ser267, Ser270, Ser282, and Ser285 each carry the phosphoserine modification. The interval 304 to 312 (FKDYVRDRA) is helix HI-1. The residue at position 305 (Lys305) is an N6-acetyllysine. The segment at 323–330 (AAALAGYT) is helix HI-2. The segment at residues 335–415 (IQLWQFLLEL…AGKRYVYRFV (81 aa)) is a DNA-binding region (ETS). A helix H4 region spans residues 418–422 (LQSLL). Positions 426 to 432 (PEELHAM) are helix H5.

This sequence belongs to the ETS family. As to quaternary structure, binds DNA as a homodimer; homodimerization is required for transcription activation. Interacts with MAF and MAFB. Interacts with PAX5; the interaction alters DNA-binding properties. Interacts with DAXX. Interacts with UBE2I. Interacts with SP100; the interaction is direct and modulates ETS1 transcriptional activity. Sumoylated on Lys-15 and Lys-227, preferentially with SUMO2; which inhibits transcriptional activity. Post-translationally, ubiquitinated; which induces proteasomal degradation. In terms of processing, phosphorylation at Ser-251, Ser-282 and Ser-285 by CaMK2/CaMKII in response to calcium signaling decreases affinity for DNA: an increasing number of phosphoserines causes DNA-binding to become progressively weaker. As to expression, highly expressed within lymphoid cells. Isoforms c-ETS-1A and Ets-1 p27 are both detected in all fetal tissues tested, but vary with tissue type in adult tissues. None is detected in brain or kidney.

The protein localises to the nucleus. Its subcellular location is the cytoplasm. With respect to regulation, autoinhibited by a module composed of four alpha helices (HI-1, HI-2, H4, and H5) that flank the DNA-binding ETS domain, reducing the affinity for DNA. Phosphorylation by CaMK2/CaMKII in response to calcium signaling decreases affinity for DNA. Transcription factor. Directly controls the expression of cytokine and chemokine genes in a wide variety of different cellular contexts. May control the differentiation, survival and proliferation of lymphoid cells. May also regulate angiogenesis through regulation of expression of genes controlling endothelial cell migration and invasion. Functionally, acts as a dominant-negative for isoform c-ETS-1A. This chain is Protein C-ets-1 (ETS1), found in Homo sapiens (Human).